A 253-amino-acid polypeptide reads, in one-letter code: Histone-arginine methyltransferase METTL23 (253 aa).

A disordered region spans residues 1 to 23; it reads MDSVRPRAPWAPPPDPASLDSPT.

The protein belongs to the methyltransferase superfamily. METTL23 family. In terms of assembly, interacts with HSPA5, HSP90B1, TUBULIN, UGGT1 and UGGT2. Interacts with TET3. Interacts with STPG4. As to expression, ubiquitously expressed.

It is found in the nucleus. The protein resides in the cytoplasm. The catalysed reaction is L-arginyl-[protein] + 2 S-adenosyl-L-methionine = N(omega),N(omega)-dimethyl-L-arginyl-[protein] + 2 S-adenosyl-L-homocysteine + 2 H(+). In terms of biological role, histone methyltransferase that dimethylates histone H3 at 'Arg-17', forming asymmetric dimethylarginine (H3R17me2a), leading to activate transcription via chromatin remodeling. Maternal factor involved in epigenetic chromatin reprogramming of the paternal genome in the zygote: mediates H3R17me2a, promoting histone H3.3 incorporation in the male pronucleus, leading to TET3 recruitment and subsequent DNA demethylation. This Mus musculus (Mouse) protein is Histone-arginine methyltransferase METTL23.